The chain runs to 331 residues: Phosphoribosylformylglycinamidine cyclo-ligase (331 aa).

Belongs to the AIR synthase family.

Its subcellular location is the cytoplasm. It carries out the reaction 2-formamido-N(1)-(5-O-phospho-beta-D-ribosyl)acetamidine + ATP = 5-amino-1-(5-phospho-beta-D-ribosyl)imidazole + ADP + phosphate + H(+). Its pathway is purine metabolism; IMP biosynthesis via de novo pathway; 5-amino-1-(5-phospho-D-ribosyl)imidazole from N(2)-formyl-N(1)-(5-phospho-D-ribosyl)glycinamide: step 2/2. This Clostridium botulinum (strain Langeland / NCTC 10281 / Type F) protein is Phosphoribosylformylglycinamidine cyclo-ligase.